A 236-amino-acid polypeptide reads, in one-letter code: Auxin-responsive protein IAA16 (236 aa).

The EAR-like (transcriptional repression) signature appears at 9–13; sequence LRLGL. The interval 82-110 is disordered; that stretch reads KNVMSGQKPTTGDATEGNDKTSGSSGATS. Residues 85-94 show a composition bias toward polar residues; that stretch reads MSGQKPTTGD. The 101-residue stretch at 118 to 218 folds into the PB1 domain; sequence VAYVKVSMDG…SCKRIRIMKG (101 aa).

The protein belongs to the Aux/IAA family. In terms of assembly, homodimers and heterodimers.

It is found in the nucleus. Functionally, aux/IAA proteins are short-lived transcriptional factors that function as repressors of early auxin response genes at low auxin concentrations. Repression is thought to result from the interaction with auxin response factors (ARFs), proteins that bind to the auxin-responsive promoter element (AuxRE). Formation of heterodimers with ARF proteins may alter their ability to modulate early auxin response genes expression. In Arabidopsis thaliana (Mouse-ear cress), this protein is Auxin-responsive protein IAA16 (IAA16).